The chain runs to 385 residues: MTTSARDTGLDSHELARLHELARHSHAVITRHQDAGGAYPAAPTFSAYRGYAWLRDGSFTAEGISRYGDVASAGRFHDWVDGVLRRRRGQVDDLLAAVDRGEVPSNEGMLPTRFTFDGNDGSDPWWDFQTDGYGMWLWSVVTHAARHGLDLERWRAGIDVAVDYLLAFWDRPCYDWWEEHVEHRHVSTLGAIHGGLVAVGTCAALRSAPWSAATLQVAARIRSLVSAEGVVDGHLVKWLGSSAVDGSLPACVVPFGLVPPDDDVAAMTRAAVAKDLDVDGGVHRFAADVFYGGGQWILLSALLGWNLAAAGDTAGALRHLRWIADQADADGDLPEQVPHHLLHPGSRAEWVARWGTVATPLLWSHGMYLILADELGLLPPAAKDA.

Position 125 (Trp-125) interacts with substrate. The active-site Proton acceptor is the Asp-175. The Proton donor role is filled by Glu-178. The Proton acceptor role is filled by Glu-335.

The protein belongs to the glycosyl hydrolase 15 family.

The protein resides in the cytoplasm. It carries out the reaction isomaltose + H2O = beta-D-glucose + D-glucose. Functionally, involved in the intracellular degradation of the cyclic tetrasaccharide cyclobis-(1-6)-alpha-nigerosyl (CNN) formed extracellularly from starch. Catalyzes the hydrolysis of alpha-1,6-glucosidic linkage from the non-reducing end of isomaltose to yield beta-D-glucose and D-glucose. Can also act on panose and isomaltotriose at a lower rate. It displays low or no activity toward CNN and the general GH15 enzyme substrates such as maltose, soluble starch or dextran. In Kribbella flavida (strain DSM 17836 / JCM 10339 / NBRC 14399), this protein is Isomaltose glucohydrolase.